Reading from the N-terminus, the 443-residue chain is Glutamate-1-semialdehyde 2,1-aminomutase (443 aa).

At K277 the chain carries N6-(pyridoxal phosphate)lysine.

Belongs to the class-III pyridoxal-phosphate-dependent aminotransferase family. HemL subfamily. As to quaternary structure, homodimer. Pyridoxal 5'-phosphate serves as cofactor.

It is found in the cytoplasm. It carries out the reaction (S)-4-amino-5-oxopentanoate = 5-aminolevulinate. Its pathway is porphyrin-containing compound metabolism; protoporphyrin-IX biosynthesis; 5-aminolevulinate from L-glutamyl-tRNA(Glu): step 2/2. This chain is Glutamate-1-semialdehyde 2,1-aminomutase, found in Pseudarthrobacter chlorophenolicus (strain ATCC 700700 / DSM 12829 / CIP 107037 / JCM 12360 / KCTC 9906 / NCIMB 13794 / A6) (Arthrobacter chlorophenolicus).